The chain runs to 156 residues: Small ribosomal subunit protein uS7 (156 aa).

The protein belongs to the universal ribosomal protein uS7 family. Part of the 30S ribosomal subunit. Contacts proteins S9 and S11.

Functionally, one of the primary rRNA binding proteins, it binds directly to 16S rRNA where it nucleates assembly of the head domain of the 30S subunit. Is located at the subunit interface close to the decoding center, probably blocks exit of the E-site tRNA. This chain is Small ribosomal subunit protein uS7, found in Acaryochloris marina (strain MBIC 11017).